A 203-amino-acid chain; its full sequence is dITP/XTP pyrophosphatase (203 aa).

Position 15-20 (15-20 (SGNAGK)) interacts with substrate. Mg(2+) is bound by residues Glu45 and Asp74. Catalysis depends on Asp74, which acts as the Proton acceptor. Substrate is bound by residues Ser75, 153–156 (FGYD), Lys176, and 181–182 (HR).

This sequence belongs to the HAM1 NTPase family. Homodimer. Requires Mg(2+) as cofactor.

The enzyme catalyses XTP + H2O = XMP + diphosphate + H(+). It carries out the reaction dITP + H2O = dIMP + diphosphate + H(+). It catalyses the reaction ITP + H2O = IMP + diphosphate + H(+). Functionally, pyrophosphatase that catalyzes the hydrolysis of nucleoside triphosphates to their monophosphate derivatives, with a high preference for the non-canonical purine nucleotides XTP (xanthosine triphosphate), dITP (deoxyinosine triphosphate) and ITP. Seems to function as a house-cleaning enzyme that removes non-canonical purine nucleotides from the nucleotide pool, thus preventing their incorporation into DNA/RNA and avoiding chromosomal lesions. This Prochlorococcus marinus (strain MIT 9313) protein is dITP/XTP pyrophosphatase.